The sequence spans 417 residues: Gamma-glutamyl phosphate reductase (417 aa).

It belongs to the gamma-glutamyl phosphate reductase family.

It localises to the cytoplasm. It catalyses the reaction L-glutamate 5-semialdehyde + phosphate + NADP(+) = L-glutamyl 5-phosphate + NADPH + H(+). It participates in amino-acid biosynthesis; L-proline biosynthesis; L-glutamate 5-semialdehyde from L-glutamate: step 2/2. Catalyzes the NADPH-dependent reduction of L-glutamate 5-phosphate into L-glutamate 5-semialdehyde and phosphate. The product spontaneously undergoes cyclization to form 1-pyrroline-5-carboxylate. The chain is Gamma-glutamyl phosphate reductase from Legionella pneumophila (strain Lens).